The primary structure comprises 51 residues: Large ribosomal subunit protein eL39 (51 aa).

It belongs to the eukaryotic ribosomal protein eL39 family. In terms of assembly, part of the 50S ribosomal subunit.

This chain is Large ribosomal subunit protein eL39, found in Thermococcus kodakarensis (strain ATCC BAA-918 / JCM 12380 / KOD1) (Pyrococcus kodakaraensis (strain KOD1)).